We begin with the raw amino-acid sequence, 483 residues long: Probable cytosol aminopeptidase (483 aa).

The Mn(2+) site is built by Lys252 and Asp257. The active site involves Lys264. The Mn(2+) site is built by Asp275, Asp334, and Glu336. Arg338 is a catalytic residue.

This sequence belongs to the peptidase M17 family. Mn(2+) serves as cofactor.

The protein resides in the cytoplasm. The catalysed reaction is Release of an N-terminal amino acid, Xaa-|-Yaa-, in which Xaa is preferably Leu, but may be other amino acids including Pro although not Arg or Lys, and Yaa may be Pro. Amino acid amides and methyl esters are also readily hydrolyzed, but rates on arylamides are exceedingly low.. It carries out the reaction Release of an N-terminal amino acid, preferentially leucine, but not glutamic or aspartic acids.. In terms of biological role, presumably involved in the processing and regular turnover of intracellular proteins. Catalyzes the removal of unsubstituted N-terminal amino acids from various peptides. The sequence is that of Probable cytosol aminopeptidase from Legionella pneumophila (strain Paris).